Reading from the N-terminus, the 201-residue chain is Holliday junction branch migration complex subunit RuvA (201 aa).

The segment at 1 to 63 (MIAYIKGTLN…EDAQILFGFQ (63 aa)) is domain I. A domain II region spans residues 64 to 142 (NRDEKYLFTK…SVFSITDEQQ (79 aa)). The flexible linker stretch occupies residues 143–149 (KSSVSNV). The domain III stretch occupies residues 150–201 (NNNEVYSEAMEALKALGYTDKEVKQVLPHLKKDNDALSVDEAIRKALALLAK).

This sequence belongs to the RuvA family. Homotetramer. Forms an RuvA(8)-RuvB(12)-Holliday junction (HJ) complex. HJ DNA is sandwiched between 2 RuvA tetramers; dsDNA enters through RuvA and exits via RuvB. An RuvB hexamer assembles on each DNA strand where it exits the tetramer. Each RuvB hexamer is contacted by two RuvA subunits (via domain III) on 2 adjacent RuvB subunits; this complex drives branch migration. In the full resolvosome a probable DNA-RuvA(4)-RuvB(12)-RuvC(2) complex forms which resolves the HJ.

It is found in the cytoplasm. The RuvA-RuvB-RuvC complex processes Holliday junction (HJ) DNA during genetic recombination and DNA repair, while the RuvA-RuvB complex plays an important role in the rescue of blocked DNA replication forks via replication fork reversal (RFR). RuvA specifically binds to HJ cruciform DNA, conferring on it an open structure. The RuvB hexamer acts as an ATP-dependent pump, pulling dsDNA into and through the RuvAB complex. HJ branch migration allows RuvC to scan DNA until it finds its consensus sequence, where it cleaves and resolves the cruciform DNA. This chain is Holliday junction branch migration complex subunit RuvA, found in Oceanobacillus iheyensis (strain DSM 14371 / CIP 107618 / JCM 11309 / KCTC 3954 / HTE831).